The following is a 466-amino-acid chain: Purple acid phosphatase 25 (466 aa).

A signal peptide spans 1-21 (MRMNKILLVFVFLSIATVINS). Residue aspartate 164 participates in Fe cation binding. N-linked (GlcNAc...) asparagine glycosylation occurs at asparagine 172. Aspartate 192 and tyrosine 195 together coordinate Fe cation. Aspartate 192 is a binding site for Zn(2+). Zn(2+) contacts are provided by asparagine 229 and histidine 314. Asparagine 229 is a binding site for substrate. Histidine 324 acts as the Proton donor in catalysis. Histidine 351 contacts Zn(2+). 351–353 (HVH) lines the substrate pocket. Residue histidine 353 participates in Fe cation binding. Residues asparagine 367 and asparagine 424 are each glycosylated (N-linked (GlcNAc...) asparagine).

Belongs to the metallophosphoesterase superfamily. Purple acid phosphatase family. In terms of assembly, homodimer. Fe cation is required as a cofactor. Zn(2+) serves as cofactor. Specifically expressed in flowers.

The protein resides in the secreted. The catalysed reaction is a phosphate monoester + H2O = an alcohol + phosphate. In Arabidopsis thaliana (Mouse-ear cress), this protein is Purple acid phosphatase 25 (PAP25).